We begin with the raw amino-acid sequence, 234 residues long: UPF0173 metal-dependent hydrolase Msp_0516 (234 aa).

The protein belongs to the UPF0173 family.

The polypeptide is UPF0173 metal-dependent hydrolase Msp_0516 (Methanosphaera stadtmanae (strain ATCC 43021 / DSM 3091 / JCM 11832 / MCB-3)).